Consider the following 133-residue polypeptide: Small ribosomal subunit protein uS9 (133 aa).

This sequence belongs to the universal ribosomal protein uS9 family.

This is Small ribosomal subunit protein uS9 from Picrophilus torridus (strain ATCC 700027 / DSM 9790 / JCM 10055 / NBRC 100828 / KAW 2/3).